The following is a 174-amino-acid chain: ATP-dependent protease subunit HslV (174 aa).

Residue Thr2 is part of the active site. Na(+)-binding residues include Ala156, Cys159, and Thr162.

It belongs to the peptidase T1B family. HslV subfamily. A double ring-shaped homohexamer of HslV is capped on each side by a ring-shaped HslU homohexamer. The assembly of the HslU/HslV complex is dependent on binding of ATP.

It is found in the cytoplasm. It carries out the reaction ATP-dependent cleavage of peptide bonds with broad specificity.. Allosterically activated by HslU binding. Functionally, protease subunit of a proteasome-like degradation complex believed to be a general protein degrading machinery. This chain is ATP-dependent protease subunit HslV, found in Agrobacterium fabrum (strain C58 / ATCC 33970) (Agrobacterium tumefaciens (strain C58)).